The primary structure comprises 123 residues: MPTINQLIRKERAKVSKRRKTPALQACPQRRGVCTRVYTTTPKKPNSALRKVARVRLTNGIEVTSYIPGEGHNLQEHSVVMIRGGRVKDLPGVRYHIIRGTLDTSGVSDRRQSRSKYGAKRPK.

Asp89 carries the 3-methylthioaspartic acid modification. Positions 101-123 (TLDTSGVSDRRQSRSKYGAKRPK) are disordered. Residues 113–123 (SRSKYGAKRPK) are compositionally biased toward basic residues.

The protein belongs to the universal ribosomal protein uS12 family. As to quaternary structure, part of the 30S ribosomal subunit. Contacts proteins S8 and S17. May interact with IF1 in the 30S initiation complex.

With S4 and S5 plays an important role in translational accuracy. In terms of biological role, interacts with and stabilizes bases of the 16S rRNA that are involved in tRNA selection in the A site and with the mRNA backbone. Located at the interface of the 30S and 50S subunits, it traverses the body of the 30S subunit contacting proteins on the other side and probably holding the rRNA structure together. The combined cluster of proteins S8, S12 and S17 appears to hold together the shoulder and platform of the 30S subunit. The sequence is that of Small ribosomal subunit protein uS12 from Solidesulfovibrio magneticus (strain ATCC 700980 / DSM 13731 / RS-1) (Desulfovibrio magneticus).